Consider the following 150-residue polypeptide: Urease accessory protein UreE (150 aa).

Belongs to the UreE family.

The protein resides in the cytoplasm. In terms of biological role, involved in urease metallocenter assembly. Binds nickel. Probably functions as a nickel donor during metallocenter assembly. The protein is Urease accessory protein UreE of Streptococcus vestibularis.